Reading from the N-terminus, the 424-residue chain is Histidine--tRNA ligase (424 aa).

This sequence belongs to the class-II aminoacyl-tRNA synthetase family. Homodimer.

It localises to the cytoplasm. It catalyses the reaction tRNA(His) + L-histidine + ATP = L-histidyl-tRNA(His) + AMP + diphosphate + H(+). The polypeptide is Histidine--tRNA ligase (Protochlamydia amoebophila (strain UWE25)).